A 161-amino-acid polypeptide reads, in one-letter code: Long arms of the bivalent protein 1 (161 aa).

Residues 72–75 (KVIW) carry the PP1 binding motif motif. Positions 85-161 (GTMFEDFKED…SDKTMCSGQS (77 aa)) are disordered. The span at 97 to 115 (QESVSSISNNEANWGSSVN) shows a compositional bias: polar residues. A compositionally biased stretch (basic and acidic residues) spans 120–129 (NYEKMQKEET). Residues 130-151 (FDPYDSDSDTSEDSDFDEDFED) show a composition bias toward acidic residues.

In terms of assembly, interacts with gsp-1 and gsp-2; the interaction is direct.

It is found in the chromosome. Its subcellular location is the nucleus. Involved in sister chromatid cohesion during mitosis and meiosis. In association with the gsp-2 phosphatase, it both restricts the localization and antagonizes the function of the air-2 kinase during meiosis I and mitosis to promote chromatid cohesion and spindle attachment. This in turn, drives germ cell immortality. Furthermore, may play a role in ensuring the timely assembly of the synaptonemal complex during prophase I of meiosis. The protein is Long arms of the bivalent protein 1 of Caenorhabditis elegans.